A 519-amino-acid polypeptide reads, in one-letter code: Protein twist (519 aa).

4 disordered regions span residues 53 to 77 (MQQQ…QQQY), 131 to 156 (NFEQ…VATA), 301 to 321 (YEAY…SDRD), and 368 to 389 (FRKP…DEFS). Composition is skewed to low complexity over residues 54 to 76 (QQQQ…QQQQ) and 134 to 146 (QQQQ…QQQQ). Residues 308 to 317 (NSLNGSTYSS) are compositionally biased toward polar residues. A compositionally biased stretch (basic residues) spans 368 to 379 (FRKPRRRLKRKP). The bHLH domain occupies 390–441 (NQRVMANVRERQRTQSLNDAFKALQQIIPTLPSDKLSKIQTLKLATRYIDFL).

Efficient DNA binding requires dimerization with another bHLH protein. Homodimer.

Its subcellular location is the nucleus. Its function is as follows. Involved in the establishment and dorsoventral patterning of germ layers in the embryo. This Drosophila virilis (Fruit fly) protein is Protein twist.